The sequence spans 373 residues: WAT1-related protein At4g08300 (373 aa).

10 consecutive transmembrane segments (helical) span residues 11–31, 41–61, 67–87, 102–122, 139–159, 185–205, 219–239, 255–275, 281–301, and 306–326; these read PIIAIISLQFGYAGMYIITMV, ILATYRHVVATIVIAPFALIL, PKMTWPLFLRILALGFLEPLL, TYSSAFVNALPAITFIMAVIF, IGTAITVGGAMVMTLYKGPAI, WVTGTLAVMGSITTWAGFFIL, LVMWICAMGTVLNTIASLIMV, AAVYSGVVCSGMAYYIQSIVI, VFTTSFSPMCMIITAFLGVLV, and IHLGSIIGAIFIVFGLYSVVW. EamA domains are found at residues 23-151 and 198-325; these read AGMY…AMVM and TWAG…YSVV.

This sequence belongs to the drug/metabolite transporter (DMT) superfamily. Plant drug/metabolite exporter (P-DME) (TC 2.A.7.4) family.

Its subcellular location is the membrane. This is WAT1-related protein At4g08300 from Arabidopsis thaliana (Mouse-ear cress).